A 1238-amino-acid polypeptide reads, in one-letter code: uncharacterized protein (1238 aa).

Disordered stretches follow at residues 22 to 83 (LQSA…QEHL), 96 to 150 (SSRQ…IASP), 169 to 250 (FEPD…HQML), 264 to 694 (QLNS…AAMV), 739 to 915 (TKAA…SVPE), 936 to 955 (THSA…APHE), and 1057 to 1089 (PKIS…QCSS). Residues 35 to 49 (QPPNQQPHQTQQQQQ) are compositionally biased toward low complexity. The segment covering 58–72 (PSIQNLTTNATPTST) has biased composition (polar residues). Residues 73–83 (QLQQQQQQEHL) are compositionally biased toward low complexity. Residues 96-110 (SSRQNQGAPSGNLSN) are compositionally biased toward polar residues. The span at 125-145 (SVSGNTNHTGSNSSSNSGSNN) shows a compositional bias: low complexity. Polar residues predominate over residues 188–204 (SASSASKLPTHNVQQQH). Composition is skewed to low complexity over residues 272–287 (SYQH…QSHP), 309–334 (PLLT…SSQH), and 393–406 (SNEE…NSSN). Residues 433 to 450 (SKPQHPQQAANLNNSCSP) are compositionally biased toward polar residues. Residue Ser453 is modified to Phosphoserine. A compositionally biased stretch (polar residues) spans 463 to 472 (PFSTQKQSQT). Over residues 523–536 (TEQHRMQQDDEPPK) the composition is skewed to basic and acidic residues. Low complexity-rich tracts occupy residues 549 to 570 (QSNS…SQSS) and 632 to 641 (TTAAVAAPPA). Position 642 is a phosphothreonine (Thr642). Residues 678-688 (ERISSPEKPAE) show a composition bias toward basic and acidic residues. Residues Ser682, Ser749, and Ser753 each carry the phosphoserine modification. The segment covering 755-764 (IPQSRSTSTP) has biased composition (polar residues). 2 positions are modified to phosphoserine: Ser793 and Ser799. The span at 832 to 860 (STSAAAAAALAARQLSEAASATKSKPAAG) shows a compositional bias: low complexity. Over residues 861 to 874 (AKKKNAGVKGKKGS) the composition is skewed to basic residues. Basic and acidic residues predominate over residues 937-947 (HSAEDVNEKQT). Residues 1071–1089 (DSSISYSDDPNESRSQCSS) show a composition bias toward polar residues. Residues 1089-1131 (SVDLLDCSTESKFVETFRGMGKTSENGFEVWLHEDCAVWSNDI) form a C2HC pre-PHD-type; degenerate zinc finger. A Phosphoserine modification is found at Ser1099. The PHD-type zinc finger occupies 1151-1199 (YQCVLCQQTGASICCFQRCCKAAAHVPCGRSANWSLSEEDRKVYCHLHR).

This is an uncharacterized protein from Drosophila melanogaster (Fruit fly).